The following is a 689-amino-acid chain: Putative pentatricopeptide repeat-containing protein At3g15130 (689 aa).

PPR repeat units lie at residues 5–39 (QRQN…GSGL), 40–70 (NLIT…MPER), 71–105 (NVVS…GIYP), 106–140 (NEFT…GFEM), 141–171 (MVEV…IVDR), 172–206 (SLIS…NIKE), 209–243 (DEFT…GFHC), 246–276 (SATI…IKEK), 277–311 (TMIS…NSQI), 312–342 (DSFA…AVKL), 347–377 (ETSV…MQLK), 378–412 (DVIS…NIEP), 413–448 (DEVC…GIKP), and 449–479 (RVEH…MPIK). The interval 484–559 (IWQTLLSLCR…EAGMSWVEIE (76 aa)) is type E motif. The interval 560–590 (REVHFFRSGEDSHPLTPVIQETLKEAERRLR) is type E(+) motif. A type DYW motif region spans residues 592–689 (ELGYVYGLKH…DGCCSCGDYW (98 aa)).

Belongs to the PPR family. PCMP-H subfamily.

The sequence is that of Putative pentatricopeptide repeat-containing protein At3g15130 (PCMP-H86) from Arabidopsis thaliana (Mouse-ear cress).